The following is a 345-amino-acid chain: RNA polymerase II holoenzyme cyclin-like subunit (345 aa).

The region spanning 53–144 (QQINRLGKRM…IGECEFYLIS (92 aa)) is the Cyclin N-terminal domain. A disordered region spans residues 256–285 (GLTPQSSSGLQAMLPPQSPAGEGPAEGNKN).

The protein belongs to the cyclin family. Cyclin C subfamily. In terms of assembly, component of the srb8-11 complex, a regulatory module of the Mediator complex.

The protein resides in the nucleus. Its function is as follows. Component of the srb8-11 complex. The srb8-11 complex is a regulatory module of the Mediator complex which is itself involved in regulation of basal and activated RNA polymerase II-dependent transcription. The srb8-11 complex may be involved in the transcriptional repression of a subset of genes regulated by Mediator. It may inhibit the association of the Mediator complex with RNA polymerase II to form the holoenzyme complex. The srb8-11 complex phosphorylates the C-terminal domain (CTD) of the largest subunit of RNA polymerase II. This Neurospora crassa (strain ATCC 24698 / 74-OR23-1A / CBS 708.71 / DSM 1257 / FGSC 987) protein is RNA polymerase II holoenzyme cyclin-like subunit (ssn8).